The primary structure comprises 359 residues: Protein mab-21-like 2 (359 aa).

This sequence belongs to the mab-21 family.

It is found in the nucleus. The protein resides in the cytoplasm. Its function is as follows. Required for eye morphogenesis. May promote the survival of proliferating retinal progenitor cells. The protein is Protein mab-21-like 2 (mab21l2) of Danio rerio (Zebrafish).